The primary structure comprises 280 residues: MTRSPWKRLLWLKQEYPDNYTDPSFIELRARQKAESNQKSDRKLSEAARAQIRLDFISFYQTILNTSFIYITFTYIYYYGFDPIPPTIFLSFITLIISRTKVDPLLSSFMDVKSSLIITFAMLTLSPVLKSLSKTTASDSIWTLSFWLTLWYIFVISSTKSKDKPSNLSTNILVALVAVLSSRLSTTIDVFCFLLICIQLNIILPTYLSVTNKVVPIISNIIVYSFLNVALGWIYMLLIFFASVFYITVLPKWFIYWKINYHKRDNDLLSTWDARTPILD.

Residues 1–53 (MTRSPWKRLLWLKQEYPDNYTDPSFIELRARQKAESNQKSDRKLSEAARAQIR) lie on the Cytoplasmic side of the membrane. The helical transmembrane segment at 54–74 (LDFISFYQTILNTSFIYITFT) threads the bilayer. A topological domain (extracellular) is located at residue Tyr75. The chain crosses the membrane as a helical span at residues 76-96 (IYYYGFDPIPPTIFLSFITLI). The Cytoplasmic segment spans residues 97–108 (ISRTKVDPLLSS). Residues 109–129 (FMDVKSSLIITFAMLTLSPVL) traverse the membrane as a helical segment. Topologically, residues 130–135 (KSLSKT) are extracellular. The helical transmembrane segment at 136 to 156 (TASDSIWTLSFWLTLWYIFVI) threads the bilayer. Over 157–189 (SSTKSKDKPSNLSTNILVALVAVLSSRLSTTID) the chain is Cytoplasmic. Residues 190-210 (VFCFLLICIQLNIILPTYLSV) form a helical membrane-spanning segment. Residues 211-220 (TNKVVPIISN) lie on the Extracellular side of the membrane. A helical membrane pass occupies residues 221–241 (IIVYSFLNVALGWIYMLLIFF). The Cytoplasmic portion of the chain corresponds to 242-280 (ASVFYITVLPKWFIYWKINYHKRDNDLLSTWDARTPILD).

Belongs to the PIGC family. Component of the phosphatidylinositol N-acetylglucosaminyltransferase (GPI-GlcNAc transferase) complex composed of at least GPI1, GPI2, GPI3, GPI15, GPI19 and ERI1. Interacts with ERI1.

The protein resides in the membrane. It carries out the reaction a 1,2-diacyl-sn-glycero-3-phospho-(1D-myo-inositol) + UDP-N-acetyl-alpha-D-glucosamine = a 6-(N-acetyl-alpha-D-glucosaminyl)-1-(1,2-diacyl-sn-glycero-3-phospho)-1D-myo-inositol + UDP + H(+). It functions in the pathway glycolipid biosynthesis; glycosylphosphatidylinositol-anchor biosynthesis. Part of the complex catalyzing the transfer of N-acetylglucosamine from UDP-N-acetylglucosamine to phosphatidylinositol, the first step of GPI biosynthesis. This Saccharomyces cerevisiae (strain ATCC 204508 / S288c) (Baker's yeast) protein is Phosphatidylinositol N-acetylglucosaminyltransferase GPI2 subunit (GPI2).